A 962-amino-acid polypeptide reads, in one-letter code: Integrator complex subunit 7 (962 aa).

Serine 338 and serine 809 each carry phosphoserine.

This sequence belongs to the Integrator subunit 7 family. Component of the Integrator complex, composed of core subunits INTS1, INTS2, INTS3, INTS4, INTS5, INTS6, INTS7, INTS8, INTS9/RC74, INTS10, INTS11/CPSF3L, INTS12, INTS13, INTS14 and INTS15. The core complex associates with protein phosphatase 2A subunits PPP2CA and PPP2R1A, to form the Integrator-PP2A (INTAC) complex. Interacts with NABP2.

Its subcellular location is the nucleus. The protein localises to the chromosome. It is found in the cytoplasm. In terms of biological role, component of the integrator complex, a multiprotein complex that terminates RNA polymerase II (Pol II) transcription in the promoter-proximal region of genes. The integrator complex provides a quality checkpoint during transcription elongation by driving premature transcription termination of transcripts that are unfavorably configured for transcriptional elongation: the complex terminates transcription by (1) catalyzing dephosphorylation of the C-terminal domain (CTD) of Pol II subunit POLR2A/RPB1 and SUPT5H/SPT5, (2) degrading the exiting nascent RNA transcript via endonuclease activity and (3) promoting the release of Pol II from bound DNA. The integrator complex is also involved in terminating the synthesis of non-coding Pol II transcripts, such as enhancer RNAs (eRNAs), small nuclear RNAs (snRNAs), telomerase RNAs and long non-coding RNAs (lncRNAs). May be not involved in the recruitment of cytoplasmic dynein to the nuclear envelope by different components of the INT complex. Plays a role in DNA damage response (DDR) signaling during the S phase. The chain is Integrator complex subunit 7 (INTS7) from Bos taurus (Bovine).